Consider the following 615-residue polypeptide: Isocitrate dehydrogenase kinase/phosphatase (615 aa).

ATP-binding positions include 328–334 (APGIRGL) and Lys349. Residue Asp384 is part of the active site. Residues 595–615 (AEPPATPPVKQPDAGPARRVA) are disordered.

The protein belongs to the AceK family.

It localises to the cytoplasm. The enzyme catalyses L-seryl-[isocitrate dehydrogenase] + ATP = O-phospho-L-seryl-[isocitrate dehydrogenase] + ADP + H(+). Its function is as follows. Bifunctional enzyme which can phosphorylate or dephosphorylate isocitrate dehydrogenase (IDH) on a specific serine residue. This is a regulatory mechanism which enables bacteria to bypass the Krebs cycle via the glyoxylate shunt in response to the source of carbon. When bacteria are grown on glucose, IDH is fully active and unphosphorylated, but when grown on acetate or ethanol, the activity of IDH declines drastically concomitant with its phosphorylation. The polypeptide is Isocitrate dehydrogenase kinase/phosphatase (Cupriavidus taiwanensis (strain DSM 17343 / BCRC 17206 / CCUG 44338 / CIP 107171 / LMG 19424 / R1) (Ralstonia taiwanensis (strain LMG 19424))).